Reading from the N-terminus, the 515-residue chain is MVSIPEYYEGKNVLLTGATGFLGKVLLEKLLRSCPKVNSVYVLVRQKAGQTPQERVEEVLSGKLFDRLRDENPDFREKIIAINSELTQPKLALSEEDKEVIIESTNIIFHCAATVRFNENLRDAVQLNVIATRQLILLAQQMKNLEVFMHVSTAYAYCNRKHIDEVVYPPPVDPKKLIDSLEWMDDGLVNDITPKLIGDRPNTYIYTKALAEYVVQQEGAKLNVAIVRPSIVGASWKEPFPGWIDNFNGPSGLFIAAGKGILRTIRASNNALADLVPVDVVVNMSLAAAWYSGVNRPRNIMVYNCTTGSTNPFHWGEVEYHVISTFKRNPLEQAFRRPNVNLTSNHLLYHYWIAVSHKAPAFLYDIYLRMTGRSPRMMKTITRLHKAMVFLEYFTSNSWVWNTDNVNMLMNQLNPEDKKTFNIDVRQLHWAEYIENYCLGTKKYVLNEEMSGLPAARKHLNKLRNIRYGFNTILVILIWRIFIARSQMARNIWYFVVSLCYKFLSYFRASSTMRY.

Residues 1 to 465 (MVSIPEYYEG…ARKHLNKLRN (465 aa)) lie on the Cytoplasmic side of the membrane. Residues 451–507 (SGLPAARKHLNKLRNIRYGFNTILVILIWRIFIARSQMARNIWYFVVSLCYKFLSYF) are necessary and sufficient for PEX19-mediated localization into peroxisome membrane. The helical transmembrane segment at 466 to 483 (IRYGFNTILVILIWRIFI) threads the bilayer. At 484–515 (ARSQMARNIWYFVVSLCYKFLSYFRASSTMRY) the chain is on the peroxisomal side.

This sequence belongs to the fatty acyl-CoA reductase family. In terms of assembly, interacts with PEX19; PEX19 mediates the targeting of FAR1 to peroxisomes.

The protein localises to the peroxisome membrane. The enzyme catalyses a long-chain fatty acyl-CoA + 2 NADPH + 2 H(+) = a long-chain primary fatty alcohol + 2 NADP(+) + CoA. It catalyses the reaction hexadecanoyl-CoA + 2 NADPH + 2 H(+) = hexadecan-1-ol + 2 NADP(+) + CoA. The catalysed reaction is octadecanoyl-CoA + 2 NADPH + 2 H(+) = octadecan-1-ol + 2 NADP(+) + CoA. It carries out the reaction (9Z)-octadecenoyl-CoA + 2 NADPH + 2 H(+) = (9Z)-octadecen-1-ol + 2 NADP(+) + CoA. The enzyme catalyses (9Z,12Z)-octadecadienoyl-CoA + 2 NADPH + 2 H(+) = (9Z,12Z)-octadecadien-1-ol + 2 NADP(+) + CoA. It catalyses the reaction eicosanoyl-CoA + 2 NADPH + 2 H(+) = eicosan-1-ol + 2 NADP(+) + CoA. The catalysed reaction is 16-methylheptadecanoyl-CoA + 2 NADPH + 2 H(+) = 16-methylheptadecan-1-ol + 2 NADP(+) + CoA. It carries out the reaction 18-methylnonadecanoyl-CoA + 2 NADPH + 2 H(+) = 18-methylnonadecan-1-ol + 2 NADP(+) + CoA. Its function is as follows. Catalyzes the reduction of saturated and unsaturated C16 or C18 fatty acyl-CoA to fatty alcohols. It plays an essential role in the production of ether lipids/plasmalogens which synthesis requires fatty alcohols. In parallel, it is also required for wax monoesters production since fatty alcohols also constitute a substrate for their synthesis. In Pongo abelii (Sumatran orangutan), this protein is Fatty acyl-CoA reductase 1.